A 197-amino-acid chain; its full sequence is Dephospho-CoA kinase (197 aa).

The 195-residue stretch at 3–197 (ILGLTGSIAM…TGCLVGQGSR (195 aa)) folds into the DPCK domain. Residue 11–16 (AMGKST) coordinates ATP.

It belongs to the CoaE family.

Its subcellular location is the cytoplasm. It catalyses the reaction 3'-dephospho-CoA + ATP = ADP + CoA + H(+). It participates in cofactor biosynthesis; coenzyme A biosynthesis; CoA from (R)-pantothenate: step 5/5. Catalyzes the phosphorylation of the 3'-hydroxyl group of dephosphocoenzyme A to form coenzyme A. This Zymomonas mobilis subsp. mobilis (strain ATCC 31821 / ZM4 / CP4) protein is Dephospho-CoA kinase.